Reading from the N-terminus, the 129-residue chain is Large ribosomal subunit protein bL17 (129 aa).

Belongs to the bacterial ribosomal protein bL17 family. Part of the 50S ribosomal subunit. Contacts protein L32.

In Thiobacillus denitrificans (strain ATCC 25259 / T1), this protein is Large ribosomal subunit protein bL17.